Reading from the N-terminus, the 512-residue chain is Cytochrome P450 26B1 (512 aa).

C441 contributes to the heme binding site.

It belongs to the cytochrome P450 family. It depends on heme as a cofactor.

The protein localises to the endoplasmic reticulum membrane. The protein resides in the microsome membrane. It carries out the reaction all-trans-retinoate + reduced [NADPH--hemoprotein reductase] + O2 = all-trans-4-hydroxyretinoate + oxidized [NADPH--hemoprotein reductase] + H2O + H(+). The enzyme catalyses all-trans-retinoate + reduced [NADPH--hemoprotein reductase] + O2 = all-trans-18-hydroxyretinoate + oxidized [NADPH--hemoprotein reductase] + H2O + H(+). In terms of biological role, a cytochrome P450 monooxygenase involved in the metabolism of retinoates (RAs), the active metabolites of vitamin A, and critical signaling molecules in animals. RAs exist as at least four different isomers: all-trans-RA (atRA), 9-cis-RA, 13-cis-RA, and 9,13-dicis-RA, where atRA is considered to be the biologically active isomer, although 9-cis-RA and 13-cis-RA also have activity. Catalyzes the hydroxylation of atRA primarily at C-4 and C-18, thereby contributing to the regulation of atRA homeostasis and signaling. Hydroxylation of atRA limits its biological activity and initiates a degradative process leading to its eventual elimination. Involved in the convertion of atRA to all-trans-4-oxo-RA. Can oxidize all-trans-13,14-dihydroretinoate (DRA) to metabolites which could include all-trans-4-oxo-DRA, all-trans-4-hydroxy-DRA, all-trans-5,8-epoxy-DRA, and all-trans-18-hydroxy-DRA. Shows preference for the following substrates: atRA &gt; 9-cis-RA &gt; 13-cis-RA. Plays a central role in germ cell development: acts by degrading RAs in the developing testis, preventing STRA8 expression, thereby leading to delay of meiosis. Required for the maintenance of the undifferentiated state of male germ cells during embryonic development in Sertoli cells, inducing arrest in G0 phase of the cell cycle and preventing meiotic entry. Plays a role in skeletal development, both at the level of patterning and in the ossification of bone and the establishment of some synovial joints. Essential for postnatal survival. Functionally, also has a significant activity in oxidation of tazarotenic acid and may therefore metabolize that xenobiotic in vivo. The protein is Cytochrome P450 26B1 (Cyp26b1) of Mus musculus (Mouse).